Here is a 181-residue protein sequence, read N- to C-terminus: Adenine phosphoribosyltransferase (181 aa).

Belongs to the purine/pyrimidine phosphoribosyltransferase family. Homodimer.

It localises to the cytoplasm. The catalysed reaction is AMP + diphosphate = 5-phospho-alpha-D-ribose 1-diphosphate + adenine. Its pathway is purine metabolism; AMP biosynthesis via salvage pathway; AMP from adenine: step 1/1. Functionally, catalyzes a salvage reaction resulting in the formation of AMP, that is energically less costly than de novo synthesis. This is Adenine phosphoribosyltransferase from Rhodopseudomonas palustris (strain BisB5).